Here is a 179-residue protein sequence, read N- to C-terminus: Large ribosomal subunit protein uL6 (179 aa).

This sequence belongs to the universal ribosomal protein uL6 family. Part of the 50S ribosomal subunit.

This protein binds to the 23S rRNA, and is important in its secondary structure. It is located near the subunit interface in the base of the L7/L12 stalk, and near the tRNA binding site of the peptidyltransferase center. This chain is Large ribosomal subunit protein uL6, found in Treponema pallidum (strain Nichols).